We begin with the raw amino-acid sequence, 209 residues long: Uracil phosphoribosyltransferase (209 aa).

5-phospho-alpha-D-ribose 1-diphosphate contacts are provided by residues Arg-79, Arg-104, and 131–139 (DPMLATGGS). Residues Ile-194 and 199–201 (GDA) contribute to the uracil site. Asp-200 contributes to the 5-phospho-alpha-D-ribose 1-diphosphate binding site.

This sequence belongs to the UPRTase family. Mg(2+) is required as a cofactor.

It catalyses the reaction UMP + diphosphate = 5-phospho-alpha-D-ribose 1-diphosphate + uracil. It functions in the pathway pyrimidine metabolism; UMP biosynthesis via salvage pathway; UMP from uracil: step 1/1. Its activity is regulated as follows. Allosterically activated by GTP. Its function is as follows. Catalyzes the conversion of uracil and 5-phospho-alpha-D-ribose 1-diphosphate (PRPP) to UMP and diphosphate. The chain is Uracil phosphoribosyltransferase from Streptococcus uberis (strain ATCC BAA-854 / 0140J).